A 486-amino-acid chain; its full sequence is Ribosomal RNA small subunit methyltransferase F (486 aa).

S-adenosyl-L-methionine contacts are provided by residues 124–130, Glu-148, Asp-175, and Asp-193; that span reads ASAPGSK. Residue Cys-246 is the Nucleophile of the active site.

It belongs to the class I-like SAM-binding methyltransferase superfamily. RsmB/NOP family.

It is found in the cytoplasm. The enzyme catalyses cytidine(1407) in 16S rRNA + S-adenosyl-L-methionine = 5-methylcytidine(1407) in 16S rRNA + S-adenosyl-L-homocysteine + H(+). Functionally, specifically methylates the cytosine at position 1407 (m5C1407) of 16S rRNA. This is Ribosomal RNA small subunit methyltransferase F from Shewanella baltica (strain OS185).